The primary structure comprises 203 residues: Phosphatidylglycerophosphatase B (203 aa).

Residue Met-1 is a topological domain, cytoplasmic. The helical transmembrane segment at 2-17 (YKPVSLFLFFLILAAA) threads the bilayer. The Extracellular segment spans residues 18–55 (IHTNAVQSADEAISKAAVLIRQPWLNEVMTGITHLGAS). The helical transmembrane segment at 56–74 (SFLLPLIVIIGAGMFFYRK) threads the bilayer. The Cytoplasmic segment spans residues 75–78 (TWDG). The chain crosses the membrane as a helical span at residues 79–99 (LLMLLVFGTDRLLNKVLKEWI). The interval 96-104 (KEWIERVRP) is phosphatase sequence motif I. Topologically, residues 100 to 119 (ERVRPDFAPLVHESSFSFPS) are extracellular. A phosphatase sequence motif II region spans residues 118–121 (PSGH). Residues 120 to 139 (GHSMNAACVYPVIAYFLVKH) traverse the membrane as a helical segment. His-121 acts as the Proton donors in catalysis. The Cytoplasmic portion of the chain corresponds to 140-146 (LPFLSKH). Residues 147-167 (KKMVYIIAGVIAVLVGISRVY) form a helical membrane-spanning segment. Residues 164–175 (SRVYLGVHFVTD) form a phosphatase sequence motif III region. At 168–172 (LGVHF) the chain is on the extracellular side. His-171 serves as the catalytic Nucleophile. The helical transmembrane segment at 173–196 (VTDVLGGFSLGLLLFFLVKGFDEK) threads the bilayer. Residues 197 to 203 (IKRFRQK) lie on the Cytoplasmic side of the membrane.

It belongs to the PA-phosphatase related phosphoesterase family.

It is found in the cell membrane. It catalyses the reaction a 1,2-diacyl-sn-glycero-3-phospho-(1'-sn-glycero-3'-phosphate) + H2O = a 1,2-diacyl-sn-glycero-3-phospho-(1'-sn-glycerol) + phosphate. In terms of biological role, catalyzes the dephosphorylation of phosphatidylglycerophosphate (PGP) to phosphatidylglycerol. Also has undecaprenyl pyrophosphate phosphatase activity, required for the biosynthesis of the lipid carrier undecaprenyl phosphate. The protein is Phosphatidylglycerophosphatase B of Bacillus subtilis (strain 168).